A 135-amino-acid chain; its full sequence is MKRLLSWLTGALLMAGLLAGLILPGSVHADEDLVGKYSGNEIRNIADDKIAAREGKVDLNNSSVRRFQQFPGMYPTMAGKIVLGGPYNDVDEVLNLDLSERQIELFNKYKENFTVTPPEIALNEGDDRINDGQYR.

Positions 1–29 are cleaved as a signal peptide; sequence MKRLLSWLTGALLMAGLLAGLILPGSVHA.

Belongs to the PsbU family. In terms of assembly, PSII is composed of 1 copy each of membrane proteins PsbA, PsbB, PsbC, PsbD, PsbE, PsbF, PsbH, PsbI, PsbJ, PsbK, PsbL, PsbM, PsbT, PsbX, PsbY, Psb30/Ycf12, peripheral proteins PsbO, CyanoQ (PsbQ), PsbU, PsbV and a large number of cofactors. It forms dimeric complexes.

The protein resides in the cellular thylakoid membrane. One of the extrinsic, lumenal subunits of photosystem II (PSII). PSII is a light-driven water plastoquinone oxidoreductase, using light energy to abstract electrons from H(2)O, generating a proton gradient subsequently used for ATP formation. The extrinsic proteins stabilize the structure of photosystem II oxygen-evolving complex (OEC), the ion environment of oxygen evolution and protect the OEC against heat-induced inactivation. The sequence is that of Photosystem II extrinsic protein U from Parasynechococcus marenigrum (strain WH8102).